The following is a 368-amino-acid chain: 4-hydroxy-3-methylbut-2-en-1-yl diphosphate synthase (flavodoxin) (368 aa).

The [4Fe-4S] cluster site is built by C271, C274, C306, and E313.

It belongs to the IspG family. It depends on [4Fe-4S] cluster as a cofactor.

It carries out the reaction (2E)-4-hydroxy-3-methylbut-2-enyl diphosphate + oxidized [flavodoxin] + H2O + 2 H(+) = 2-C-methyl-D-erythritol 2,4-cyclic diphosphate + reduced [flavodoxin]. Its pathway is isoprenoid biosynthesis; isopentenyl diphosphate biosynthesis via DXP pathway; isopentenyl diphosphate from 1-deoxy-D-xylulose 5-phosphate: step 5/6. In terms of biological role, converts 2C-methyl-D-erythritol 2,4-cyclodiphosphate (ME-2,4cPP) into 1-hydroxy-2-methyl-2-(E)-butenyl 4-diphosphate. The polypeptide is 4-hydroxy-3-methylbut-2-en-1-yl diphosphate synthase (flavodoxin) (Histophilus somni (strain 129Pt) (Haemophilus somnus)).